A 239-amino-acid polypeptide reads, in one-letter code: 1-(5-phosphoribosyl)-5-[(5-phosphoribosylamino)methylideneamino] imidazole-4-carboxamide isomerase (239 aa).

D8 functions as the Proton acceptor in the catalytic mechanism. The active-site Proton donor is D129.

The protein belongs to the HisA/HisF family.

It is found in the cytoplasm. It catalyses the reaction 1-(5-phospho-beta-D-ribosyl)-5-[(5-phospho-beta-D-ribosylamino)methylideneamino]imidazole-4-carboxamide = 5-[(5-phospho-1-deoxy-D-ribulos-1-ylimino)methylamino]-1-(5-phospho-beta-D-ribosyl)imidazole-4-carboxamide. The protein operates within amino-acid biosynthesis; L-histidine biosynthesis; L-histidine from 5-phospho-alpha-D-ribose 1-diphosphate: step 4/9. The chain is 1-(5-phosphoribosyl)-5-[(5-phosphoribosylamino)methylideneamino] imidazole-4-carboxamide isomerase from Bacillus cytotoxicus (strain DSM 22905 / CIP 110041 / 391-98 / NVH 391-98).